Consider the following 198-residue polypeptide: Ribosome maturation factor RimP (198 aa).

This sequence belongs to the RimP family.

Its subcellular location is the cytoplasm. Functionally, required for maturation of 30S ribosomal subunits. This Rhizobium rhizogenes (strain K84 / ATCC BAA-868) (Agrobacterium radiobacter) protein is Ribosome maturation factor RimP.